A 72-amino-acid polypeptide reads, in one-letter code: ATP synthase subunit c (72 aa).

2 consecutive transmembrane segments (helical) span residues 5–25 and 52–72; these read LLAA…IGIA and GLSE…LFVV.

The protein belongs to the ATPase C chain family. In terms of assembly, F-type ATPases have 2 components, F(1) - the catalytic core - and F(0) - the membrane proton channel. F(1) has five subunits: alpha(3), beta(3), gamma(1), delta(1), epsilon(1). F(0) has three main subunits: a(1), b(2) and c(10-14). The alpha and beta chains form an alternating ring which encloses part of the gamma chain. F(1) is attached to F(0) by a central stalk formed by the gamma and epsilon chains, while a peripheral stalk is formed by the delta and b chains.

The protein localises to the cell membrane. F(1)F(0) ATP synthase produces ATP from ADP in the presence of a proton or sodium gradient. F-type ATPases consist of two structural domains, F(1) containing the extramembraneous catalytic core and F(0) containing the membrane proton channel, linked together by a central stalk and a peripheral stalk. During catalysis, ATP synthesis in the catalytic domain of F(1) is coupled via a rotary mechanism of the central stalk subunits to proton translocation. Functionally, key component of the F(0) channel; it plays a direct role in translocation across the membrane. A homomeric c-ring of between 10-14 subunits forms the central stalk rotor element with the F(1) delta and epsilon subunits. This is ATP synthase subunit c from Clostridium perfringens (strain SM101 / Type A).